We begin with the raw amino-acid sequence, 206 residues long: ATP-dependent Clp protease proteolytic subunit (206 aa).

S108 acts as the Nucleophile in catalysis. H133 is a catalytic residue.

Belongs to the peptidase S14 family. Fourteen ClpP subunits assemble into 2 heptameric rings which stack back to back to give a disk-like structure with a central cavity, resembling the structure of eukaryotic proteasomes.

Its subcellular location is the cytoplasm. It catalyses the reaction Hydrolysis of proteins to small peptides in the presence of ATP and magnesium. alpha-casein is the usual test substrate. In the absence of ATP, only oligopeptides shorter than five residues are hydrolyzed (such as succinyl-Leu-Tyr-|-NHMec, and Leu-Tyr-Leu-|-Tyr-Trp, in which cleavage of the -Tyr-|-Leu- and -Tyr-|-Trp bonds also occurs).. Functionally, cleaves peptides in various proteins in a process that requires ATP hydrolysis. Has a chymotrypsin-like activity. Plays a major role in the degradation of misfolded proteins. This Chromohalobacter salexigens (strain ATCC BAA-138 / DSM 3043 / CIP 106854 / NCIMB 13768 / 1H11) protein is ATP-dependent Clp protease proteolytic subunit.